The sequence spans 299 residues: Probable lipid kinase YegS (299 aa).

Positions 2–133 (AEFPASLLIL…IDMAQVNKQT (132 aa)) constitute a DAGKc domain. ATP-binding positions include T40, 66-72 (GDGTINE), and T95. Mg(2+) contacts are provided by L215, D218, and L220. Catalysis depends on E271, which acts as the Proton acceptor.

This sequence belongs to the diacylglycerol/lipid kinase family. YegS lipid kinase subfamily. It depends on Mg(2+) as a cofactor. Requires Ca(2+) as cofactor.

Its subcellular location is the cytoplasm. In terms of biological role, probably phosphorylates lipids; the in vivo substrate is unknown. This chain is Probable lipid kinase YegS, found in Shigella boydii serotype 18 (strain CDC 3083-94 / BS512).